We begin with the raw amino-acid sequence, 906 residues long: Protein translocase subunit SecA (906 aa).

ATP contacts are provided by residues Q86, 104 to 108 (GEGKT), and D499. Residues C890, C892, C901, and H902 each contribute to the Zn(2+) site.

This sequence belongs to the SecA family. Monomer and homodimer. Part of the essential Sec protein translocation apparatus which comprises SecA, SecYEG and auxiliary proteins SecDF-YajC and YidC. The cofactor is Zn(2+).

Its subcellular location is the cell inner membrane. It localises to the cytoplasm. The catalysed reaction is ATP + H2O + cellular proteinSide 1 = ADP + phosphate + cellular proteinSide 2.. Functionally, part of the Sec protein translocase complex. Interacts with the SecYEG preprotein conducting channel. Has a central role in coupling the hydrolysis of ATP to the transfer of proteins into and across the cell membrane, serving both as a receptor for the preprotein-SecB complex and as an ATP-driven molecular motor driving the stepwise translocation of polypeptide chains across the membrane. The polypeptide is Protein translocase subunit SecA (Rickettsia prowazekii (strain Madrid E)).